A 235-amino-acid polypeptide reads, in one-letter code: Purine nucleoside phosphorylase DeoD-type (235 aa).

Residue histidine 4 participates in a purine D-ribonucleoside binding. Residues glycine 20, arginine 24, arginine 43, and 87–90 (RVGT) each bind phosphate. Residues glutamate 162, 179–181 (EME), and 203–204 (SD) each bind a purine D-ribonucleoside. Aspartate 204 functions as the Proton donor in the catalytic mechanism.

Belongs to the PNP/UDP phosphorylase family. Homohexamer; trimer of homodimers.

It catalyses the reaction a purine D-ribonucleoside + phosphate = a purine nucleobase + alpha-D-ribose 1-phosphate. The enzyme catalyses a purine 2'-deoxy-D-ribonucleoside + phosphate = a purine nucleobase + 2-deoxy-alpha-D-ribose 1-phosphate. Its function is as follows. Catalyzes the reversible phosphorolytic breakdown of the N-glycosidic bond in the beta-(deoxy)ribonucleoside molecules, with the formation of the corresponding free purine bases and pentose-1-phosphate. The polypeptide is Purine nucleoside phosphorylase DeoD-type (Bacillus cereus (strain B4264)).